The sequence spans 155 residues: Fibroblast growth factor 1 (155 aa).

Ala-2 is subject to N-acetylalanine. The propeptide occupies 2–15 (AEGETTTFRALTEK). Asn-33 provides a ligand contact to heparin. The tract at residues 127–143 (KKNGSSKLGPRTHFGQK) is heparin-binding.

Belongs to the heparin-binding growth factors family. As to quaternary structure, monomer. Homodimer. Interacts with FGFR1, FGFR2, FGFR3 and FGFR4. Affinity between fibroblast growth factors (FGFs) and their receptors is increased by heparan sulfate glycosaminoglycans that function as coreceptors. Found in a complex with FGFBP1, FGF1 and FGF2. Interacts with FGFBP1. Part of a Cu(2+)-dependent multiprotein aggregate containing FGF1, S100A13 and SYT1. Interacts with SYT1. Interacts with S100A13. Interacts with LRRC59. Interacts with CSNKA, CSNKB and FIBP. While binding with LRRC59, CSNKA and FIBP seem mutually exclusive, CSNKB and FIBP may cooperatively interact with FGF1. Forms a ternary complex with FGFR1 and ITGAV:ITGB3 and induces the recruitment of PTPN11 to the complex. In the nucleus, phosphorylated by PKC/PRKCD.

It is found in the secreted. The protein resides in the cytoplasm. Its subcellular location is the cell cortex. The protein localises to the cytosol. It localises to the nucleus. In terms of biological role, plays an important role in the regulation of cell survival, cell division, angiogenesis, cell differentiation and cell migration. Functions as a potent mitogen in vitro. Acts as a ligand for FGFR1 and integrins. Binds to FGFR1 in the presence of heparin leading to FGFR1 dimerization and activation via sequential autophosphorylation on tyrosine residues which act as docking sites for interacting proteins, leading to the activation of several signaling cascades. Binds to integrin ITGAV:ITGB3. Its binding to integrin, subsequent ternary complex formation with integrin and FGFR1, and the recruitment of PTPN11 to the complex are essential for FGF1 signaling. Induces the phosphorylation and activation of FGFR1, FRS2, MAPK3/ERK1, MAPK1/ERK2 and AKT1. Can induce angiogenesis. The protein is Fibroblast growth factor 1 (FGF1) of Ovis aries (Sheep).